We begin with the raw amino-acid sequence, 483 residues long: GDP-fucose protein O-fucosyltransferase 4 (483 aa).

Methionine 1 is a topological domain (cytoplasmic). The chain crosses the membrane as a helical; Signal-anchor for type II membrane protein span at residues 2–21 (ALCLWLFLVLPICCWCQGAV). Residues 22–483 (DLGDSGVFQP…RARGLSNDSR (462 aa)) are Lumenal-facing. 2 N-linked (GlcNAc...) asparagine glycosylation sites follow: asparagine 151 and asparagine 303. A disulfide bridge links cysteine 374 with cysteine 377. Residues 387-425 (RKAHRKNPKQNQPPQPKMANSSHMGCPLPSPGYGPVENV) are disordered. N-linked (GlcNAc...) asparagine glycans are attached at residues asparagine 406, asparagine 428, asparagine 456, and asparagine 480.

The protein belongs to the glycosyltransferase 10 family.

The protein localises to the endoplasmic reticulum membrane. It carries out the reaction L-threonyl-[protein] + GDP-beta-L-fucose = 3-O-(alpha-L-fucosyl)-L-threonyl-[protein] + GDP + H(+). The catalysed reaction is L-seryl-[protein] + GDP-beta-L-fucose = 3-O-(alpha-L-fucosyl)-L-seryl-[protein] + GDP + H(+). It functions in the pathway protein modification; protein glycosylation. Protein O-fucosyltransferase that specifically catalyzes O-fucosylation of serine or threonine residues in EMI domains of target proteins. Attaches fucose through an O-glycosidic linkage. O-fucosylation of EMI domain-containing proteins may be required for facilitating protein folding and secretion. This Danio rerio (Zebrafish) protein is GDP-fucose protein O-fucosyltransferase 4 (fut11).